The sequence spans 707 residues: Protein SGM1 (707 aa).

The segment covering 1–11 (MSKKLSLEERL) has biased composition (basic and acidic residues). Positions 1–52 (MSKKLSLEERLSLATKKGRKKNKRSTSNLSSPSPVVLSNNEQESARTSIDDA) are disordered. An N-acetylserine modification is found at Ser2. Residues 27-40 (SNLSSPSPVVLSNN) are compositionally biased toward low complexity. The stretch at 122-473 (VEELVKEISP…KPHQENSNEK (352 aa)) forms a coiled coil. Ser151, Ser538, Ser549, Ser568, Ser571, Ser576, and Ser589 each carry phosphoserine. Positions 594–706 (SAHLVNKLST…QQMVEMQGKM (113 aa)) form a coiled coil.

The protein belongs to the SGM1 family. In terms of assembly, interacts with YPT6.

The protein localises to the golgi apparatus. Its function is as follows. Required for normal growth rate on galactose and mannose. In Saccharomyces cerevisiae (strain ATCC 204508 / S288c) (Baker's yeast), this protein is Protein SGM1 (SGM1).